The primary structure comprises 197 residues: Proteasome subunit beta 1 (197 aa).

The propeptide at 1–6 is removed in mature form; by autocatalysis; that stretch reads MNRKTG. The active-site Nucleophile is Thr7.

It belongs to the peptidase T1B family. As to quaternary structure, the 20S proteasome core is composed of 14 alpha and 14 beta subunits that assemble into four stacked heptameric rings, resulting in a barrel-shaped structure. The two inner rings, each composed of seven catalytic beta subunits, are sandwiched by two outer rings, each composed of seven alpha subunits. The catalytic chamber with the active sites is on the inside of the barrel. Has a gated structure, the ends of the cylinder being occluded by the N-termini of the alpha-subunits. Is capped at one or both ends by the proteasome regulatory ATPase, PAN.

Its subcellular location is the cytoplasm. It catalyses the reaction Cleavage of peptide bonds with very broad specificity.. Its activity is regulated as follows. The formation of the proteasomal ATPase PAN-20S proteasome complex, via the docking of the C-termini of PAN into the intersubunit pockets in the alpha-rings, triggers opening of the gate for substrate entry. Interconversion between the open-gate and close-gate conformations leads to a dynamic regulation of the 20S proteasome proteolysis activity. In terms of biological role, component of the proteasome core, a large protease complex with broad specificity involved in protein degradation. The protein is Proteasome subunit beta 1 of Pyrococcus abyssi (strain GE5 / Orsay).